The sequence spans 185 residues: ATP synthase subunit delta (185 aa).

This sequence belongs to the ATPase delta chain family. In terms of assembly, F-type ATPases have 2 components, F(1) - the catalytic core - and F(0) - the membrane proton channel. F(1) has five subunits: alpha(3), beta(3), gamma(1), delta(1), epsilon(1). F(0) has three main subunits: a(1), b(2) and c(10-14). The alpha and beta chains form an alternating ring which encloses part of the gamma chain. F(1) is attached to F(0) by a central stalk formed by the gamma and epsilon chains, while a peripheral stalk is formed by the delta and b chains.

It localises to the cell inner membrane. F(1)F(0) ATP synthase produces ATP from ADP in the presence of a proton or sodium gradient. F-type ATPases consist of two structural domains, F(1) containing the extramembraneous catalytic core and F(0) containing the membrane proton channel, linked together by a central stalk and a peripheral stalk. During catalysis, ATP synthesis in the catalytic domain of F(1) is coupled via a rotary mechanism of the central stalk subunits to proton translocation. Its function is as follows. This protein is part of the stalk that links CF(0) to CF(1). It either transmits conformational changes from CF(0) to CF(1) or is implicated in proton conduction. The polypeptide is ATP synthase subunit delta (Ehrlichia chaffeensis (strain ATCC CRL-10679 / Arkansas)).